Consider the following 156-residue polypeptide: 2-C-methyl-D-erythritol 2,4-cyclodiphosphate synthase (156 aa).

Residues Asp-8 and His-10 each coordinate a divalent metal cation. 4-CDP-2-C-methyl-D-erythritol 2-phosphate is bound by residues Asp-8 to His-10 and His-34 to Ser-35. Position 42 (His-42) interacts with a divalent metal cation. 4-CDP-2-C-methyl-D-erythritol 2-phosphate is bound by residues Asp-56–Gly-58, Phe-61–Asp-65, Ala-100–Ala-106, Thr-132–Glu-135, and Phe-139.

This sequence belongs to the IspF family. Homotrimer. The cofactor is a divalent metal cation.

It catalyses the reaction 4-CDP-2-C-methyl-D-erythritol 2-phosphate = 2-C-methyl-D-erythritol 2,4-cyclic diphosphate + CMP. Its pathway is isoprenoid biosynthesis; isopentenyl diphosphate biosynthesis via DXP pathway; isopentenyl diphosphate from 1-deoxy-D-xylulose 5-phosphate: step 4/6. Involved in the biosynthesis of isopentenyl diphosphate (IPP) and dimethylallyl diphosphate (DMAPP), two major building blocks of isoprenoid compounds. Catalyzes the conversion of 4-diphosphocytidyl-2-C-methyl-D-erythritol 2-phosphate (CDP-ME2P) to 2-C-methyl-D-erythritol 2,4-cyclodiphosphate (ME-CPP) with a corresponding release of cytidine 5-monophosphate (CMP). This chain is 2-C-methyl-D-erythritol 2,4-cyclodiphosphate synthase, found in Clostridium perfringens (strain ATCC 13124 / DSM 756 / JCM 1290 / NCIMB 6125 / NCTC 8237 / Type A).